Reading from the N-terminus, the 480-residue chain is REST corepressor 1 (480 aa).

Positions 1 to 105 are disordered; sequence MPAMVEKGPE…GGGMRVGPQY (105 aa). Composition is skewed to low complexity over residues 21–58 and 66–89; these read AASA…AAAA and SLAA…SGSS. An interaction with HDAC1 region spans residues 72 to 251; the sequence is PNGNSGSNSW…RHARKQKRER (180 aa). Residues 97-183 form the ELM2 domain; the sequence is GGMRVGPQYQ…KSLADLPNFT (87 aa). K116 participates in a covalent cross-link: Glycyl lysine isopeptide (Lys-Gly) (interchain with G-Cter in SUMO2). S121 bears the Phosphoserine mark. One can recognise an SANT 1 domain in the interval 184–235; that stretch reads PFPDEWTVEDKVLFEQAFSFHGKTFHRIQQMLPDKSIASLVKFYYSWKKTRT. Positions 238–265 form a coiled coil; that stretch reads SVMDRHARKQKREREESEDELEETNGSN. The disordered stretch occupies residues 238–308; it reads SVMDRHARKQ…AKNRAKRKPP (71 aa). S254 is modified (phosphoserine). Residues 272–282 are compositionally biased toward basic and acidic residues; sequence DPNKESKKEVP. The tract at residues 290–378 is interaction with KDM1A; the sequence is VKKEKHSTQA…LPEVIQKCNA (89 aa). K291 is covalently cross-linked (Glycyl lysine isopeptide (Lys-Gly) (interchain with G-Cter in SUMO2)). The stretch at 328-363 forms a coiled coil; sequence ATTVLRQLDMELVSIKRQIQNIKQTNSALKEKLDGG. In terms of domain architecture, SANT 2 spans 375-426; the sequence is KCNARWTTEEQLLAVQAIRKYGRDFQAISDVIGNKSVVQVKNFFVNYRRRFN. Residues 436–466 are disordered; the sequence is AEHGKDETNGPANQKPVKSPESSIKIPEEED. Phosphoserine is present on S454. Residue K460 forms a Glycyl lysine isopeptide (Lys-Gly) (interchain with G-Cter in SUMO2) linkage.

Belongs to the CoREST family. Component of a BHC histone deacetylase complex that contains HDAC1, HDAC2, HMG20B/BRAF35, KDM1A, RCOR1/CoREST and PHF21A/BHC80. The BHC complex may also contain ZMYM2, ZNF217, ZMYM3, GSE1 and GTF2I. Interacts with REST. Interacts with the SMARCE1/BAF57, suggesting that the BHC complex may recruit the ATP-dependent chromatin-remodeling SWI-SNF complex. Interacts directly with GFI1 and GFI1B in a RCOR/GFI/KDM1A/HDAC complex. Interacts with INMS1. Interacts with SOX2. As to expression, expressed in the external germinal layer (EGL) and internal granular layer (IGL) of the cerebellum and in Purkinje cells (at protein level).

The protein localises to the nucleus. In terms of biological role, essential component of the BHC complex, a corepressor complex that represses transcription of neuron-specific genes in non-neuronal cells. The BHC complex is recruited at RE1/NRSE sites by REST and acts by deacetylating and demethylating specific sites on histones, thereby acting as a chromatin modifier. In the BHC complex, it serves as a molecular beacon for the recruitment of molecular machinery, including MeCP2 and SUV39H1, that imposes silencing across a chromosomal interval. Plays a central role in demethylation of Lys-4 of histone H3 by promoting demethylase activity of KDM1A on core histones and nucleosomal substrates. It also protects KDM1A from the proteasome. Component of a RCOR/GFI/KDM1A/HDAC complex that suppresses, via histone deacetylase (HDAC) recruitment, a number of genes implicated in multilineage blood cell development and controls hematopoietic differentiation. This Mus musculus (Mouse) protein is REST corepressor 1 (Rcor1).